Here is a 271-residue protein sequence, read N- to C-terminus: Thermoregulatory protein LcrF (271 aa).

The HTH araC/xylS-type domain occupies 167–265 (ERLQKFMEEN…GCTPSQARLT (99 aa)). 2 DNA-binding regions (H-T-H motif) span residues 184-205 (SKFA…GTVY) and 232-255 (IVDI…RRRF).

Transcriptional activator of the thermally regulated virulent yopE gene. LcrF activity could be modulated by the interaction with an inducer molecule serving as a temperature messenger. The availability of the messenger would in turn be controlled by a temperature-responsive process serving as a cellular thermometer. This is Thermoregulatory protein LcrF (lcrF) from Yersinia pestis.